We begin with the raw amino-acid sequence, 237 residues long: Ribosomal RNA small subunit methyltransferase G (237 aa).

Residues glycine 76, phenylalanine 81, 128-129, and arginine 147 each bind S-adenosyl-L-methionine; that span reads VE.

It belongs to the methyltransferase superfamily. RNA methyltransferase RsmG family.

It is found in the cytoplasm. Functionally, specifically methylates the N7 position of a guanine in 16S rRNA. This Prochlorococcus marinus (strain MIT 9215) protein is Ribosomal RNA small subunit methyltransferase G.